Here is a 343-residue protein sequence, read N- to C-terminus: Fc receptor-like protein 1 (343 aa).

The signal sequence occupies residues Met-1–Pro-16. Ig-like C2-type domains follow at residues Ala-17 to His-109 and Pro-117 to Ala-200. The Extracellular portion of the chain corresponds to Ala-17 to Ser-219. A glycan (N-linked (GlcNAc...) asparagine) is linked at Asn-51. Cys-138 and Cys-185 are oxidised to a cystine. An N-linked (GlcNAc...) asparagine glycan is attached at Asn-202. Residues Leu-220–Cys-240 form a helical membrane-spanning segment. The Cytoplasmic portion of the chain corresponds to Tyr-241–Met-343. Residues Ser-251–Glu-278 form a disordered region. The span at Pro-258–Pro-269 shows a compositional bias: polar residues. 3 short sequence motifs (ITIM motif) span residues Ser-266–Ser-271, Pro-279–Val-284, and Glu-291–Val-296. Tyr-281 is subject to Phosphotyrosine. Position 297 is a phosphotyrosine (Tyr-297). 2 short sequence motifs (ITIM motif) span residues Gly-325–Pro-330 and Met-337–Ala-342.

Interacts with ABL1. Interacts with GRB2 and SOS1. Interacts with SHIP-1/INPP5D. Phosphorylated on C-terminal region upon BCR ligation leading to recruitment of ABL1. Widely expressed. Expressed in B-cells at the various stages of differentiation.

It is found in the cell membrane. In terms of biological role, may function as an activating coreceptor in B-cells. May function in B-cells activation and differentiation. The protein is Fc receptor-like protein 1 (Fcrl1) of Mus musculus (Mouse).